Reading from the N-terminus, the 377-residue chain is MAGAKSEVIYLGDKDLNRNRHRDRDQSPEREIKILFFDLTHYNRTTQFLLCCGGVFALYLVYGYMQELIFTLEGFRPYGWYLTLVQFAYYTAFGYIERSVERTTVPRCIPLRTYALLAFLTLGTMGLSNSSVGYLNYPTQVIFKCCKLIPVLIGSVLIQGKKHGPMDFFAATAMCLGLILFTLADSQVQPDFNRFGVFLISLALLCDAAIGNVQEKAMREHRAPNNEVVIYSYGIGFVYLAVIMLLSGHLVQGVAFCARYPMETYGYAFLFSLTGYLGIQIVLTLVRTCGAPLAATVTTARKAVTIALSFVFFSKPFTIQYLWSGLIVVFGIYLNVYSKRSKLTFADLGRMASTVYRWVLRLPPAKDGGSRTSLLEV.

The next 10 membrane-spanning stretches (helical) occupy residues 50 to 70 (LCCG…ELIF), 77 to 97 (PYGW…GYIE), 115 to 135 (ALLA…VGYL), 138 to 158 (PTQV…SVLI), 164 to 184 (GPMD…FTLA), 195 to 215 (FGVF…NVQE), 228 to 248 (VVIY…LLSG), 266 to 286 (GYAF…LTLV), 293 to 313 (LAAT…FVFF), and 317 to 337 (FTIQ…LNVY).

It belongs to the nucleotide-sugar transporter family. SLC35B subfamily.

The protein resides in the golgi apparatus membrane. In terms of biological role, mediates the transport of adenosine 3'-phospho 5'-phosphosulfate (PAPS), from cytosol into Golgi. PAPS is a universal sulfuryl donor for sulfation events that take place in the Golgi. Essential for viability. Involved in glycosaminoglycan synthesis and the subsequent signaling. May be involved in hh and dpp signaling by controlling the sulfation of heparan sulfate (HS). The chain is Adenosine 3'-phospho 5'-phosphosulfate transporter 2 from Anopheles gambiae (African malaria mosquito).